The chain runs to 514 residues: Histidine ammonia-lyase (514 aa).

The segment at residues 146–148 is a cross-link (5-imidazolinone (Ala-Gly)); it reads ASG. At Ser147 the chain carries 2,3-didehydroalanine (Ser).

It belongs to the PAL/histidase family. Post-translationally, contains an active site 4-methylidene-imidazol-5-one (MIO), which is formed autocatalytically by cyclization and dehydration of residues Ala-Ser-Gly.

It localises to the cytoplasm. It carries out the reaction L-histidine = trans-urocanate + NH4(+). Its pathway is amino-acid degradation; L-histidine degradation into L-glutamate; N-formimidoyl-L-glutamate from L-histidine: step 1/3. This chain is Histidine ammonia-lyase, found in Clostridium tetani (strain Massachusetts / E88).